Consider the following 71-residue polypeptide: Mitotic-spindle organizing protein 1 (71 aa).

This sequence belongs to the MOZART1 family. As to quaternary structure, part of the gamma-tubulin complex.

It localises to the cytoplasm. The protein localises to the cytoskeleton. Its subcellular location is the microtubule organizing center. The protein resides in the spindle pole body. Its function is as follows. Required for gamma-tubulin complex recruitment to the microtubule organizing center (MTOC). The polypeptide is Mitotic-spindle organizing protein 1 (Aspergillus clavatus (strain ATCC 1007 / CBS 513.65 / DSM 816 / NCTC 3887 / NRRL 1 / QM 1276 / 107)).